A 175-amino-acid chain; its full sequence is MNVNQNKKVLFLTDIENGLEPILQEATNTSAENMLTIQSYGASISHPYGEIMRSVIFAIYQEDVEEIFVVGTKDKKTSAGNGLTQLETMKDKIQTLDYLFQNCKPEFLGGTVDEWLNENSSDTIEKSVDMIRHHPLVPSYVKVRGLFVNHKGGKPSIAEVPDVKTGQAMPDHCLS.

The protein belongs to the beta-class carbonic anhydrase family.

This Bacillus subtilis (strain 168) protein is Putative carbonic anhydrase-like protein YbcF (ybcF).